Reading from the N-terminus, the 189-residue chain is Peptidyl-tRNA hydrolase (189 aa).

Position 15 (Tyr-15) interacts with tRNA. Catalysis depends on His-20, which acts as the Proton acceptor. Positions 66, 68, and 114 each coordinate tRNA.

Belongs to the PTH family. In terms of assembly, monomer.

The protein resides in the cytoplasm. It carries out the reaction an N-acyl-L-alpha-aminoacyl-tRNA + H2O = an N-acyl-L-amino acid + a tRNA + H(+). Its function is as follows. Hydrolyzes ribosome-free peptidyl-tRNAs (with 1 or more amino acids incorporated), which drop off the ribosome during protein synthesis, or as a result of ribosome stalling. In terms of biological role, catalyzes the release of premature peptidyl moieties from peptidyl-tRNA molecules trapped in stalled 50S ribosomal subunits, and thus maintains levels of free tRNAs and 50S ribosomes. The protein is Peptidyl-tRNA hydrolase of Streptococcus pyogenes serotype M6 (strain ATCC BAA-946 / MGAS10394).